Here is a 208-residue protein sequence, read N- to C-terminus: Ras-related protein RABH1b (208 aa).

Glycine 16 to threonine 23 lines the GTP pocket. The short motif at tyrosine 38–phenylalanine 46 is the Effector region element. GTP is bound by residues aspartate 64–glutamine 68, asparagine 122–aspartate 125, and serine 152–alanine 153. 2 S-geranylgeranyl cysteine lipidation sites follow: cysteine 206 and cysteine 208. Position 208 is a cysteine methyl ester (cysteine 208).

This sequence belongs to the small GTPase superfamily. Rab family. Interacts with the C-terminus of GC5, but not with GC3. As to expression, expressed in roots, stems, leaves and flowers.

Its subcellular location is the golgi apparatus membrane. It is found in the cytoplasm. It localises to the cytosol. In terms of biological role, protein transport. Regulator of membrane traffic from the Golgi apparatus towards the endoplasmic reticulum (ER). Binds GTP and GDP and possesses intrinsic GTPase activity. This is Ras-related protein RABH1b (RABH1B) from Arabidopsis thaliana (Mouse-ear cress).